Consider the following 194-residue polypeptide: uncharacterized protein (194 aa).

2 consecutive CBS domains span residues 13 to 72 and 78 to 133; these read MSFP…PKDV and MSKK…LLEI. The region spanning 159–192 is the ACP-type MB domain; it reads YINGICENCGYQGRVRLYQGRYLCDECIEEFEEK. Cys164, Cys167, Cys182, and Cys185 together coordinate Fe cation. Zn(2+) is bound by residues Cys164, Cys167, Cys182, and Cys185.

This is an uncharacterized protein from Methanocaldococcus jannaschii (strain ATCC 43067 / DSM 2661 / JAL-1 / JCM 10045 / NBRC 100440) (Methanococcus jannaschii).